The primary structure comprises 874 residues: Alanine--tRNA ligase (874 aa).

Zn(2+)-binding residues include His-562, His-566, Cys-665, and His-669.

This sequence belongs to the class-II aminoacyl-tRNA synthetase family. It depends on Zn(2+) as a cofactor.

The protein resides in the cytoplasm. It catalyses the reaction tRNA(Ala) + L-alanine + ATP = L-alanyl-tRNA(Ala) + AMP + diphosphate. Its function is as follows. Catalyzes the attachment of alanine to tRNA(Ala) in a two-step reaction: alanine is first activated by ATP to form Ala-AMP and then transferred to the acceptor end of tRNA(Ala). Also edits incorrectly charged Ser-tRNA(Ala) and Gly-tRNA(Ala) via its editing domain. The protein is Alanine--tRNA ligase of Pseudomonas aeruginosa (strain ATCC 15692 / DSM 22644 / CIP 104116 / JCM 14847 / LMG 12228 / 1C / PRS 101 / PAO1).